A 383-amino-acid chain; its full sequence is NADH-quinone oxidoreductase subunit D 1 (383 aa).

The protein belongs to the complex I 49 kDa subunit family. In terms of assembly, NDH-1 is composed of 14 different subunits. Subunits NuoB, C, D, E, F, and G constitute the peripheral sector of the complex.

It is found in the cell membrane. It catalyses the reaction a quinone + NADH + 5 H(+)(in) = a quinol + NAD(+) + 4 H(+)(out). NDH-1 shuttles electrons from NADH, via FMN and iron-sulfur (Fe-S) centers, to quinones in the respiratory chain. The immediate electron acceptor for the enzyme in this species is believed to be a menaquinone. Couples the redox reaction to proton translocation (for every two electrons transferred, four hydrogen ions are translocated across the cytoplasmic membrane), and thus conserves the redox energy in a proton gradient. This Streptomyces coelicolor (strain ATCC BAA-471 / A3(2) / M145) protein is NADH-quinone oxidoreductase subunit D 1.